The chain runs to 391 residues: O-methyltransferase ATR12 (391 aa).

Residues 233 to 234 (GG), Asp259, and 279 to 280 (DF) each bind S-adenosyl-L-methionine. His299 serves as the catalytic Proton acceptor.

It belongs to the class I-like SAM-binding methyltransferase superfamily. Cation-independent O-methyltransferase family. COMT subfamily.

Its pathway is mycotoxin biosynthesis. O-methyltransferase; part of the core atranone cluster (CAC) which products are predicted to catalyze most or all steps of mycotoxin atranone synthesis, starting from geranylgeranyl pyrophosphate (GGPP). The initial cyclization of GGPP to dolabellane is probably performed by the terpene cyclase ATR13. The Baeyer-Villiger oxidation near the end of the atranone synthesis, which converts atranones D and E to atranones F and G is predicted to be catalyzed by the monooxygenase ATR8. Of the CAC's other predicted gene products, the reducing PKS ATR6 might synthesize a polyketide chain. This polyketide is probably transferred onto the atranone backbone by the polyketide transferase ATR5. Other predicted CAC products include 4 oxygenases (ATR2, ATR3, ATR4, and ATR14), 3 short-chain reductases (ATR7, ATR9, and ATR10), and a methyltransferase (ATR12). These may all be involved in the various steps of atranone biosynthesis, although their specific roles must await experimental determination. This is O-methyltransferase ATR12 from Stachybotrys chlorohalonatus (strain IBT 40285).